We begin with the raw amino-acid sequence, 536 residues long: Chorismate synthase (536 aa).

His17 is an active-site residue. The tract at residues 37-59 is disordered; it reads EDVQPQLNRRRPGQGPLSTQRRE. His104 is an active-site residue. Positions 344–377 are disordered; the sequence is ERDGCSAATLSRERASDGRTTSRHEEEVERGRER. The span at 354-377 shows a compositional bias: basic and acidic residues; that stretch reads SRERASDGRTTSRHEEEVERGRER. Asp489 is an active-site residue.

The protein belongs to the chorismate synthase family. Requires FMNH2 as cofactor.

The catalysed reaction is 5-O-(1-carboxyvinyl)-3-phosphoshikimate = chorismate + phosphate. It carries out the reaction FMNH2 + NADP(+) = FMN + NADPH + 2 H(+). It functions in the pathway metabolic intermediate biosynthesis; chorismate biosynthesis; chorismate from D-erythrose 4-phosphate and phosphoenolpyruvate: step 7/7. Its function is as follows. Bifunctional chorismate synthase and flavin reductase. Catalyzes the conversion of 5-enolpyruvylshikimate 3-phosphate (EPSP) to form chorismate. Acts also as a flavin reductase (FR) able to generate reduced flavin mononucleotide in the presence of NADPH. This chain is Chorismate synthase (AROC), found in Toxoplasma gondii.